We begin with the raw amino-acid sequence, 412 residues long: Histidine--tRNA ligase (412 aa).

This sequence belongs to the class-II aminoacyl-tRNA synthetase family. In terms of assembly, homodimer.

It localises to the cytoplasm. The catalysed reaction is tRNA(His) + L-histidine + ATP = L-histidyl-tRNA(His) + AMP + diphosphate + H(+). The polypeptide is Histidine--tRNA ligase (Rickettsia typhi (strain ATCC VR-144 / Wilmington)).